The sequence spans 393 residues: S-adenosylmethionine synthase 1 (393 aa).

E9 provides a ligand contact to Mg(2+). H15 is a binding site for ATP. E43 provides a ligand contact to K(+). The L-methionine site is built by E56 and Q99. ATP-binding positions include 167–169 (DGK), 235–238 (SGRF), D246, 252–253 (RK), A269, K273, and K277. D246 contributes to the L-methionine binding site. K277 is a binding site for L-methionine.

The protein belongs to the AdoMet synthase family. As to quaternary structure, homotetramer. The cofactor is Mn(2+). It depends on Mg(2+) as a cofactor. Requires Co(2+) as cofactor. K(+) serves as cofactor.

Its subcellular location is the cytoplasm. It carries out the reaction L-methionine + ATP + H2O = S-adenosyl-L-methionine + phosphate + diphosphate. It functions in the pathway amino-acid biosynthesis; S-adenosyl-L-methionine biosynthesis; S-adenosyl-L-methionine from L-methionine: step 1/1. Catalyzes the formation of S-adenosylmethionine from methionine and ATP. The reaction comprises two steps that are both catalyzed by the same enzyme: formation of S-adenosylmethionine (AdoMet) and triphosphate, and subsequent hydrolysis of the triphosphate. The protein is S-adenosylmethionine synthase 1 (METK1) of Solanum tuberosum (Potato).